Consider the following 307-residue polypeptide: Tyrosine recombinase XerC (307 aa).

The Core-binding (CB) domain occupies 6–89 (HNTLQTVNTF…TLRTFFRYLM (84 aa)). The Tyr recombinase domain maps to 110–293 (RLPKALDVDQ…DFQHLAQVYD (184 aa)). Catalysis depends on residues Arg151, Lys175, His245, Arg248, and His271. Tyr280 acts as the O-(3'-phospho-DNA)-tyrosine intermediate in catalysis.

The protein belongs to the 'phage' integrase family. XerC subfamily. In terms of assembly, forms a cyclic heterotetrameric complex composed of two molecules of XerC and two molecules of XerD.

Its subcellular location is the cytoplasm. Functionally, site-specific tyrosine recombinase, which acts by catalyzing the cutting and rejoining of the recombining DNA molecules. The XerC-XerD complex is essential to convert dimers of the bacterial chromosome into monomers to permit their segregation at cell division. It also contributes to the segregational stability of plasmids. This Alcanivorax borkumensis (strain ATCC 700651 / DSM 11573 / NCIMB 13689 / SK2) protein is Tyrosine recombinase XerC.